Consider the following 373-residue polypeptide: Cyclin-A3-1 (373 aa).

Residues 50-80 (AVVLKPQPAPRGGKRAASHAAEPKKPAPPPA) are disordered.

Belongs to the cyclin family. Cyclin AB subfamily.

The polypeptide is Cyclin-A3-1 (CYCA3-1) (Oryza sativa subsp. japonica (Rice)).